We begin with the raw amino-acid sequence, 657 residues long: Probable potassium transport system protein Kup (657 aa).

A disordered region spans residues 1–25 (MGSGPADEEHTVDTEPGVSPPRRTV). 12 consecutive transmembrane segments (helical) span residues 35-55 (VVVG…IYTI), 77-97 (VVSL…VLLV), 127-147 (TAVL…DSMI), 165-185 (PGLE…LFSV), 196-216 (LFGP…VSGI), 234-254 (FFFG…LAVT), 275-295 (WLVL…ALLL), 315-335 (WPMV…VITG), 365-385 (IYVP…VFAF), 394-414 (AFGM…FYIV), 422-442 (LWLV…FLAA), and 447-467 (LVHG…VMTT).

Belongs to the HAK/KUP transporter (TC 2.A.72) family.

Its subcellular location is the cell membrane. It carries out the reaction K(+)(in) + H(+)(in) = K(+)(out) + H(+)(out). In terms of biological role, transport of potassium into the cell. Likely operates as a K(+):H(+) symporter. In Rhodococcus jostii (strain RHA1), this protein is Probable potassium transport system protein Kup.